We begin with the raw amino-acid sequence, 107 residues long: Replication restart protein PriB (107 aa).

The region spanning 8-107 is the SSB domain; that stretch reads IENRLSLIGV…LHAEHIELLD (100 aa).

This sequence belongs to the PriB family. In terms of assembly, homodimer. Interacts with PriA and DnaT. Component of the replication restart primosome. Primosome assembly occurs via a 'hand-off' mechanism. PriA binds to replication forks, subsequently PriB then DnaT bind; DnaT then displaces ssDNA to generate the helicase loading substrate.

In terms of biological role, involved in the restart of stalled replication forks, which reloads the replicative helicase on sites other than the origin of replication; the PriA-PriB pathway is the major replication restart pathway. During primosome assembly it facilitates complex formation between PriA and DnaT on DNA; stabilizes PriA on DNA. Stimulates the DNA unwinding activity of PriA helicase. This Actinobacillus succinogenes (strain ATCC 55618 / DSM 22257 / CCUG 43843 / 130Z) protein is Replication restart protein PriB.